The chain runs to 1214 residues: Ubiquitin carboxyl-terminal hydrolase 36 (1214 aa).

Residues 124–169 (AVGSNGHDNNTVNGGTVNGNRKQTVDSGQSNQNSSANPNELPKPKR) are disordered. A compositionally biased stretch (low complexity) spans 132 to 143 (NNTVNGGTVNGN). Residues 144–161 (RKQTVDSGQSNQNSSANP) are compositionally biased toward polar residues. The 311-residue stretch at 192–502 (AGMLNVGNTC…NAYIMFYELD (311 aa)) folds into the USP domain. The Nucleophile role is filled by Cys201. His461 (proton acceptor) is an active-site residue. The span at 509–523 (SSTINNNSSSSSNNS) shows a compositional bias: low complexity. The segment at 509-532 (SSTINNNSSSSSNNSVAPKLNGLR) is disordered. Residues Ser553 and Ser555 each carry the phosphoserine modification. Disordered regions lie at residues 631-819 (GEAA…KQKT), 836-964 (HRIA…ASKS), 977-1001 (QKLLNGSAKSAATTRPGNGYQSESV), 1048-1161 (HGDT…PNFQ), and 1176-1214 (KFQQQRALQRHLAAGGGFTRRQQQSTGQQQQQQQQQQQS). Residues 633–651 (AAPNANTNANANKSSCNNN) show a composition bias toward low complexity. The span at 666–685 (SDEDEDEDDSDDDDDDDDDD) shows a compositional bias: acidic residues. Position 717 is a phosphothreonine (Thr717). A phosphoserine mark is found at Ser727 and Ser729. Low complexity-rich tracts occupy residues 735–751 (QQQQQQQQQLLQTPQQL) and 785–816 (KTNGSVSNTSNSSHSKAKSASNASSANVNSSK). The segment covering 856 to 868 (EQVQTEQGTKKLN) has biased composition (polar residues). Residues 869-878 (SASSASASKS) show a composition bias toward low complexity. Ser891 is modified (phosphoserine). Thr894 is subject to Phosphothreonine. Ser897 is subject to Phosphoserine. Residues 915 to 942 (DDDDEEDEEEDDVEADADQEDDDDEVVV) show a composition bias toward acidic residues. Residue Thr951 is modified to Phosphothreonine. Positions 983-1001 (SAKSAATTRPGNGYQSESV) are enriched in polar residues. Residues 1058-1076 (NSSSNNSSNINSNSNSNSN) show a composition bias toward low complexity. Positions 1089-1098 (EAREQRKRDA) are enriched in basic and acidic residues. Composition is skewed to low complexity over residues 1178 to 1188 (QQQRALQRHLA) and 1197 to 1214 (QQQSTGQQQQQQQQQQQS).

This sequence belongs to the peptidase C19 family. In terms of assembly, interacts with atms/PAF1, but not with CycT.

It localises to the nucleus. It is found in the nucleolus. The enzyme catalyses Thiol-dependent hydrolysis of ester, thioester, amide, peptide and isopeptide bonds formed by the C-terminal Gly of ubiquitin (a 76-residue protein attached to proteins as an intracellular targeting signal).. In terms of biological role, required for maintaining multiple types of adult stem cells, including male and female germline, epithelial follicle cell and intestinal stem cells. May function as a transcriptional repressor by continually deubiquiting histone H2B at the promoters of genes critical for cellular differentiation, thereby preventing histone H3 'Lys-4' trimethylation (H3K4). Controls selective autophagy activation by ubiquitinated proteins. This chain is Ubiquitin carboxyl-terminal hydrolase 36 (Usp36), found in Drosophila virilis (Fruit fly).